A 36-amino-acid chain; its full sequence is Pancreatic polypeptide (36 aa).

Phenylalanine 36 is modified (phenylalanine amide).

It belongs to the NPY family.

The protein localises to the secreted. In terms of biological role, hormone secreted by pancreatic cells that acts as a regulator of pancreatic and gastrointestinal functions. The polypeptide is Pancreatic polypeptide (ppy) (Aquarana catesbeiana (American bullfrog)).